A 65-amino-acid chain; its full sequence is Metallothionein-B (65 aa).

Belongs to the metallothionein superfamily. Type 4 family.

Functionally, metallothioneins have a high content of cysteine residues that bind various heavy metals. The chain is Metallothionein-B (MTB1) from Strongylocentrotus purpuratus (Purple sea urchin).